The sequence spans 1777 residues: Fatty acid synthase subunit alpha (1777 aa).

Residues 101–124 (APVESADNEPAQPAASSTPAAPAP) form a disordered region. The segment covering 110 to 120 (PAQPAASSTPA) has biased composition (low complexity). A Carrier domain is found at 151 to 237 (LSAIDVVISI…KVMGGHIDRL (87 aa)). Position 186 is an O-(pantetheine 4'-phosphoryl)serine (serine 186). The ketoreductase (KR) domain stretch occupies residues 563–803 (FTGRRVLVTG…ILSLLSGDIL (241 aa)). A Ketosynthase family 3 (KS3) domain is found at 1007–1539 (KEIMHEVVID…QKGGLVVGIA (533 aa)). Residues cysteine 1193, histidine 1424, and histidine 1465 each act as for beta-ketoacyl synthase activity in the active site. A Mg(2+)-binding site is contributed by aspartate 1661. Acetyl-CoA-binding positions include 1661–1663 (DIE), 1706–1716 (EAIFKSLQIPS), 1730–1734 (SNGAQ), and 1760–1762 (ITH).

The protein belongs to the thiolase-like superfamily. Fungal fatty acid synthetase subunit alpha family. In terms of assembly, fatty acid synthase is composed of alpha and beta subunits.

The enzyme catalyses acetyl-CoA + n malonyl-CoA + 2n NADPH + 4n H(+) = a long-chain-acyl-CoA + n CoA + n CO2 + 2n NADP(+).. It catalyses the reaction a fatty acyl-[ACP] + malonyl-[ACP] + H(+) = a 3-oxoacyl-[ACP] + holo-[ACP] + CO2. It carries out the reaction a (3R)-hydroxyacyl-[ACP] + NADP(+) = a 3-oxoacyl-[ACP] + NADPH + H(+). It functions in the pathway secondary metabolite biosynthesis. Fatty acid synthase alpha subunit; part of the gene cluster that mediates the biosynthesis of oryzines, natural products with an unusual maleidride backbone. The two subunits of the fungal fatty acid synthase oryfasA and oryfasB probably form octenoic acid. This fatty acid is most likely activated by the acyl-CoA ligase oryP to give octenyl-CoA before the citrate synthase-like protein oryE catalyzes condensation with oxaloacetate to form tricarboxylic acid. The next steps of the pathways are conjectural, but a favorite possible route has been proposed, beginning with decarboxylation and concomitant dehydration by the decarboxylase oryM, followed by tautomerization, which may lead to the production of a diene intermediate. Reduction of this diene intermediate could give the known metabolite piliformic acid. On the pathway to oryzine B and oryzine A, however, hydroxylation of the diene by the alpha-ketoglutarate-dependent dioxygenase oryG and lactonisation by the lactonohydrolases oryH or oryL could give oryzine B directly. Finally, enoyl reduction by the dehydrogenase oryD would then convert oryzine B into oryzine A. This Aspergillus oryzae (strain ATCC 42149 / RIB 40) (Yellow koji mold) protein is Fatty acid synthase subunit alpha.